A 261-amino-acid chain; its full sequence is Glucose 1-dehydrogenase (261 aa).

11-35 is an NADP(+) binding site; sequence VITGSSTGLGKSMAIRFATEKAKVV. Substrate is bound at residue S145. Y158 (proton acceptor) is an active-site residue.

The protein belongs to the short-chain dehydrogenases/reductases (SDR) family. Homotetramer.

It catalyses the reaction D-glucose + NAD(+) = D-glucono-1,5-lactone + NADH + H(+). It carries out the reaction D-glucose + NADP(+) = D-glucono-1,5-lactone + NADPH + H(+). This chain is Glucose 1-dehydrogenase, found in Priestia megaterium (Bacillus megaterium).